We begin with the raw amino-acid sequence, 523 residues long: Volkensin (523 aa).

Active-site residues include Tyr-74, Tyr-113, Glu-162, and Arg-165. Position 111–113 (111–113) interacts with AMP; the sequence is GGY. 2 disulfides stabilise this stretch: Cys-245/Cys-269 and Cys-285/Cys-304. The propeptide at 251-265 is linker peptide; the sequence is QSDSPLVIRSFVDRN. Residues 270-397 enclose the Ricin B-type lectin 1 domain; it reads PSGETTAFIV…YAASQAWRVT (128 aa). A carbohydrate contacts are provided by residues 287 to 291, Gln-300, Lys-305, and Asn-311; that span reads DVKVE. A disulfide bridge links Cys-328 with Cys-343. Residues Asn-358 and Asn-398 each coordinate a carbohydrate. 2 N-linked (GlcNAc...) asparagine glycosylation sites follow: Asn-358 and Asn-398. In terms of domain architecture, Ricin B-type lectin 2 spans 400–523; the sequence is TVPTVTTIVG…HGNSNQQWFL (124 aa). 2 disulfide bridges follow: Cys-414–Cys-427 and Cys-453–Cys-471.

This sequence in the N-terminal section; belongs to the ribosome-inactivating protein family. Type 2 RIP subfamily. Disulfide-linked dimer of A and B chains. N-glycosylated. Contains mannose and galactose. Expressed in roots (at protein level). Expressed in seeds (at protein level).

It carries out the reaction Endohydrolysis of the N-glycosidic bond at one specific adenosine on the 28S rRNA.. Hemagglutinating activity is inhibited by galactose and structurally related sugars. Has N-glycosidase activity and is responsible for inhibiting protein synthesis through the catalytic inactivation of 60S ribosomal subunits by removing a specific adenine of 28S rRNA. Inhibits GTP-dependent binding of EF2 (elongation factor 2) to ribosomes. In terms of biological role, binds to cell receptors and probably facilitates the entry into the cell of the A chain. Also acts as a galactose-specific lectin responsible for cell agglutination. In Adenia volkensii (Kilyambiti plant), this protein is Volkensin.